Consider the following 332-residue polypeptide: Holliday junction branch migration complex subunit RuvB (332 aa).

The interval 1 to 182 (MNKNFIESNL…FAFTCRLEYY (182 aa)) is large ATPase domain (RuvB-L). Residues Leu-21, Arg-22, Gly-63, Lys-66, Thr-67, Thr-68, 129 to 131 (EDF), Arg-172, Tyr-182, and Arg-219 contribute to the ATP site. Thr-67 contacts Mg(2+). A small ATPAse domain (RuvB-S) region spans residues 183 to 253 (DPMILQKILL…VANRALTMLS (71 aa)). The tract at residues 256–332 (EKGLDEMDKK…YQHIVGSSQR (77 aa)) is head domain (RuvB-H). Residues Arg-311 and Arg-316 each coordinate DNA.

Belongs to the RuvB family. In terms of assembly, homohexamer. Forms an RuvA(8)-RuvB(12)-Holliday junction (HJ) complex. HJ DNA is sandwiched between 2 RuvA tetramers; dsDNA enters through RuvA and exits via RuvB. An RuvB hexamer assembles on each DNA strand where it exits the tetramer. Each RuvB hexamer is contacted by two RuvA subunits (via domain III) on 2 adjacent RuvB subunits; this complex drives branch migration. In the full resolvosome a probable DNA-RuvA(4)-RuvB(12)-RuvC(2) complex forms which resolves the HJ.

The protein resides in the cytoplasm. The enzyme catalyses ATP + H2O = ADP + phosphate + H(+). In terms of biological role, the RuvA-RuvB-RuvC complex processes Holliday junction (HJ) DNA during genetic recombination and DNA repair, while the RuvA-RuvB complex plays an important role in the rescue of blocked DNA replication forks via replication fork reversal (RFR). RuvA specifically binds to HJ cruciform DNA, conferring on it an open structure. The RuvB hexamer acts as an ATP-dependent pump, pulling dsDNA into and through the RuvAB complex. RuvB forms 2 homohexamers on either side of HJ DNA bound by 1 or 2 RuvA tetramers; 4 subunits per hexamer contact DNA at a time. Coordinated motions by a converter formed by DNA-disengaged RuvB subunits stimulates ATP hydrolysis and nucleotide exchange. Immobilization of the converter enables RuvB to convert the ATP-contained energy into a lever motion, pulling 2 nucleotides of DNA out of the RuvA tetramer per ATP hydrolyzed, thus driving DNA branch migration. The RuvB motors rotate together with the DNA substrate, which together with the progressing nucleotide cycle form the mechanistic basis for DNA recombination by continuous HJ branch migration. Branch migration allows RuvC to scan DNA until it finds its consensus sequence, where it cleaves and resolves cruciform DNA. The sequence is that of Holliday junction branch migration complex subunit RuvB from Protochlamydia amoebophila (strain UWE25).